We begin with the raw amino-acid sequence, 463 residues long: Fumarate hydratase class II (463 aa).

Substrate is bound by residues 98 to 100 (SGT), 129 to 132 (HPND), 139 to 141 (SSN), and Thr-187. The active-site Proton donor/acceptor is His-188. The active site involves Ser-318. Substrate is bound by residues Ser-319 and 324–326 (KVN).

It belongs to the class-II fumarase/aspartase family. Fumarase subfamily. As to quaternary structure, homotetramer.

Its subcellular location is the cytoplasm. The catalysed reaction is (S)-malate = fumarate + H2O. It participates in carbohydrate metabolism; tricarboxylic acid cycle; (S)-malate from fumarate: step 1/1. Involved in the TCA cycle. Catalyzes the stereospecific interconversion of fumarate to L-malate. This is Fumarate hydratase class II from Rickettsia bellii (strain RML369-C).